Here is a 189-residue protein sequence, read N- to C-terminus: Apolipoprotein D (189 aa).

Residues 1–20 (MVMLLLLLSALAGLFGAAEG) form the signal peptide. Residue glutamine 21 is modified to Pyrrolidone carboxylic acid. 2 cysteine pairs are disulfide-bonded: cysteine 28–cysteine 134 and cysteine 61–cysteine 185. N-linked (GlcNAc...) asparagine glycans are attached at residues asparagine 65 and asparagine 98.

The protein belongs to the calycin superfamily. Lipocalin family. As to quaternary structure, homodimer.

The protein resides in the secreted. Its function is as follows. APOD occurs in the macromolecular complex with lecithin-cholesterol acyltransferase. It is probably involved in the transport and binding of bilin. Appears to be able to transport a variety of ligands in a number of different contexts. This is Apolipoprotein D (APOD) from Macaca fascicularis (Crab-eating macaque).